A 237-amino-acid chain; its full sequence is dTDP-3-amino-3,4,6-trideoxy-alpha-D-glucopyranose N,N-dimethyltransferase (237 aa).

Residues Y14 and R17 each contribute to the substrate site. S-adenosyl-L-methionine-binding positions include Y21, A46, E67, 89–90 (DM), and M105. Substrate is bound by residues 145-147 (TFA), S152, 165-169 (RVSHS), and R229.

The protein belongs to the methyltransferase TylM1/DesVI family. As to quaternary structure, homodimer.

It catalyses the reaction dTDP-3-amino-3,4,6-trideoxy-alpha-D-glucose + 2 S-adenosyl-L-methionine = dTDP-alpha-D-desosamine + 2 S-adenosyl-L-homocysteine + 2 H(+). The protein operates within antibiotic biosynthesis. Functionally, S-adenosyl-L-methionine-dependent methyltransferase involved in the biosynthesis of desosamine, found in certain macrolide antibiotics such as erthyromycin, azithromycin, clarithromycin, and methymycin. Catalyzes the last step in the biosynthesis of dTDP-desosamine, i.e. the N,N-dimethylation of the 3-amino group of dTDP-3-amino-3,4,6-trideoxy-alpha-D-glucose. The polypeptide is dTDP-3-amino-3,4,6-trideoxy-alpha-D-glucopyranose N,N-dimethyltransferase (Streptomyces venezuelae).